Consider the following 49-residue polypeptide: Large ribosomal subunit protein bL33C (49 aa).

This sequence belongs to the bacterial ribosomal protein bL33 family.

This chain is Large ribosomal subunit protein bL33C, found in Lactococcus lactis subsp. cremoris (strain MG1363).